We begin with the raw amino-acid sequence, 423 residues long: Sulfate adenylyltransferase (423 aa).

It belongs to the sulfate adenylyltransferase family.

The catalysed reaction is sulfate + ATP + H(+) = adenosine 5'-phosphosulfate + diphosphate. Its pathway is sulfur metabolism; hydrogen sulfide biosynthesis; sulfite from sulfate: step 1/3. The sequence is that of Sulfate adenylyltransferase from Desulfovibrio desulfuricans (strain ATCC 27774 / DSM 6949 / MB).